We begin with the raw amino-acid sequence, 48 residues long: Sperm protamine R3 isoform 1 (48 aa).

Basic residues predominate over residues alanine 1–serine 29. The interval alanine 1–proline 48 is disordered.

In terms of tissue distribution, testis.

The protein localises to the nucleus. The protein resides in the chromosome. Its function is as follows. Protamines substitute for histones in the chromatin of sperm during the haploid phase of spermatogenesis. They compact sperm DNA into a highly condensed, stable and inactive complex. This is Sperm protamine R3 isoform 1 from Hydrolagus colliei (Spotted ratfish).